Reading from the N-terminus, the 396-residue chain is Elongation factor Tu 1 (396 aa).

The tr-type G domain occupies 10 to 206 (KPHVNVGTIG…ALDTYIPTPK (197 aa)). Residues 19-26 (GHVDHGKT) form a G1 region. 19–26 (GHVDHGKT) is a binding site for GTP. Mg(2+) is bound at residue T26. The G2 stretch occupies residues 60 to 64 (GITIS). The interval 81 to 84 (DCPG) is G3. Residues 81-85 (DCPGH) and 136-139 (NKAD) each bind GTP. A G4 region spans residues 136 to 139 (NKAD). A G5 region spans residues 174–176 (SAL).

It belongs to the TRAFAC class translation factor GTPase superfamily. Classic translation factor GTPase family. EF-Tu/EF-1A subfamily. As to quaternary structure, monomer.

Its subcellular location is the cytoplasm. It catalyses the reaction GTP + H2O = GDP + phosphate + H(+). Its function is as follows. GTP hydrolase that promotes the GTP-dependent binding of aminoacyl-tRNA to the A-site of ribosomes during protein biosynthesis. The sequence is that of Elongation factor Tu 1 from Ruthia magnifica subsp. Calyptogena magnifica.